The chain runs to 146 residues: Globin (146 aa).

An N-acetylalanine modification is found at Ala1. The Globin domain maps to 1–146; it reads ALTEPQKTAL…LLTMLIKAHS (146 aa). Residues His65 and His97 each contribute to the heme b site.

This sequence belongs to the globin family. Homodimer.

In Buccinum undatum (Common whelk), this protein is Globin.